A 30-amino-acid chain; its full sequence is Varv peptide G (30 aa).

A cross-link (cyclopeptide (Gly-Asn)) is located at residues 1-30 (GVPVCGETCFGGTCNTPGCSCDPWPVCSRN). 3 disulfides stabilise this stretch: Cys5–Cys19, Cys9–Cys21, and Cys14–Cys27.

Post-translationally, this is a cyclic peptide.

Its function is as follows. Probably participates in a plant defense mechanism. The protein is Varv peptide G of Viola arvensis (European field pansy).